The primary structure comprises 154 residues: Large ribosomal subunit protein uL30 (154 aa).

This sequence belongs to the universal ribosomal protein uL30 family. In terms of assembly, part of the 50S ribosomal subunit.

The polypeptide is Large ribosomal subunit protein uL30 (Methanococcus maripaludis (strain C5 / ATCC BAA-1333)).